The sequence spans 206 residues: Large ribosomal subunit protein uL4 (206 aa).

Residues Met-63 to His-98 are disordered. The segment covering Tyr-64–Ser-76 has biased composition (basic residues).

It belongs to the universal ribosomal protein uL4 family. As to quaternary structure, part of the 50S ribosomal subunit.

Its function is as follows. One of the primary rRNA binding proteins, this protein initially binds near the 5'-end of the 23S rRNA. It is important during the early stages of 50S assembly. It makes multiple contacts with different domains of the 23S rRNA in the assembled 50S subunit and ribosome. In terms of biological role, forms part of the polypeptide exit tunnel. This is Large ribosomal subunit protein uL4 from Chelativorans sp. (strain BNC1).